Consider the following 4753-residue polypeptide: Dynein heavy chain domain-containing protein 1 (4753 aa).

Coiled coils occupy residues 826–858 and 936–991; these read IHAI…ALHE and KLQQ…LSEL. Residues 2688–2766 form a disordered region; that stretch reads HLGKDHQESE…SRGMKESISH (79 aa). The segment covering 2695-2712 has biased composition (acidic residues); that stretch reads ESEEEEEEERVPEVESEG. The segment covering 2740 to 2751 has biased composition (polar residues); it reads RVSNSRDPSLTP. Coiled-coil stretches lie at residues 3125 to 3227, 3590 to 3651, and 4431 to 4460; these read LQQQ…MSKA, MRNQ…QGSK, and GAQL…LTHV. Residues 3580–3657 form a disordered region; the sequence is ALTEGRGKGL…QGSKPAYETQ (78 aa). The segment covering 3602–3615 has biased composition (acidic residues); the sequence is KEEDDESEESNEAE. Positions 3616–3631 are enriched in basic and acidic residues; the sequence is DQTKEQKAEERKNEQE. The span at 3632-3641 shows a compositional bias: acidic residues; that stretch reads KEQEENEEKE. A disordered region spans residues 4669–4697; it reads ALQDSPSSQPSPLPPVSISTQAPGTSDLP.

Belongs to the dynein heavy chain family. In terms of tissue distribution, expressed in spermatozoa (at protein level).

It localises to the cell projection. It is found in the cilium. The protein localises to the flagellum. Functionally, essential for the normal assembly and function of sperm flagella axonemes. The sequence is that of Dynein heavy chain domain-containing protein 1 (DNHD1) from Homo sapiens (Human).